The primary structure comprises 104 residues: Large ribosomal subunit protein uL23 (104 aa).

This sequence belongs to the universal ribosomal protein uL23 family. In terms of assembly, part of the 50S ribosomal subunit. Contacts protein L29, and trigger factor when it is bound to the ribosome.

One of the early assembly proteins it binds 23S rRNA. One of the proteins that surrounds the polypeptide exit tunnel on the outside of the ribosome. Forms the main docking site for trigger factor binding to the ribosome. The polypeptide is Large ribosomal subunit protein uL23 (Burkholderia multivorans (strain ATCC 17616 / 249)).